Here is a 157-residue protein sequence, read N- to C-terminus: Transcriptional repressor NrdR (157 aa).

The tract at residues 1 to 21 (MKCPNCHKNGSRVVDSRPADN) is disordered. Residues 3 to 34 (CPNCHKNGSRVVDSRPADNGHAIRRRRECEQC) fold into a zinc finger. The ATP-cone domain maps to 49 to 139 (LLVIKKNGTR…VYREFKDMHA (91 aa)).

The protein belongs to the NrdR family. It depends on Zn(2+) as a cofactor.

In terms of biological role, negatively regulates transcription of bacterial ribonucleotide reductase nrd genes and operons by binding to NrdR-boxes. The polypeptide is Transcriptional repressor NrdR (Ligilactobacillus salivarius (strain UCC118) (Lactobacillus salivarius)).